The sequence spans 691 residues: Elongation factor G 1 (691 aa).

The tr-type G domain maps to Glu-8 to Gln-282. Residues Ala-17–Thr-24, Asp-81–His-85, and Asn-135–Asp-138 contribute to the GTP site.

Belongs to the TRAFAC class translation factor GTPase superfamily. Classic translation factor GTPase family. EF-G/EF-2 subfamily.

The protein resides in the cytoplasm. Functionally, catalyzes the GTP-dependent ribosomal translocation step during translation elongation. During this step, the ribosome changes from the pre-translocational (PRE) to the post-translocational (POST) state as the newly formed A-site-bound peptidyl-tRNA and P-site-bound deacylated tRNA move to the P and E sites, respectively. Catalyzes the coordinated movement of the two tRNA molecules, the mRNA and conformational changes in the ribosome. The polypeptide is Elongation factor G 1 (Trichodesmium erythraeum (strain IMS101)).